We begin with the raw amino-acid sequence, 548 residues long: MAKELRFGDDARLQMLAGVNALADAVQVTMGPRGRNVVLEKSYGAPTVTKDGVSVAKEIEFEHRFMNMGAQMVKEVASKTSDTAGDGTTTATVLARSILVEGHKAVAAGMNPMDLKRGIDKAVLAVTKKLQAMSKPCKDSKAIAQVGTISANSDEAIGAIIAEAMEKVGKEGVITVEDGNGLENELYVVEGMQFDRGYISPYFINNQQNMSCELEHPFILLVDKKVSSIREMLSVLEGVAKSGRPLLIIAEDVEGEALATLVVNNMRGIVKVCAVKAPGFGDRRKAMLQDIAILTKGQVISEEIGKSLEGATLEDLGSAKRIVVTKENTTIIDGEGKATEINARIAQIRAQMEETTSDYDREKLQERVAKLAGGVAVIKVGAATEVEMKEKKARVEDALHATRAAVEEGIVAGGGVALIRAQKALDSLKGDNDDQNMGINILRRAIESPMRQIVTNAGYEASVVVNKVAEHKDNYGFNAATGEYGDMVEMGILDPTKVTRMALQNAASVASLMLTTECMVADLPKKEEGVGAGDMGGMGGMGGMGGMM.

Residues 29-32 (TMGP), lysine 50, 86-90 (DGTTT), glycine 414, 478-480 (NAA), and aspartate 494 contribute to the ATP site.

It belongs to the chaperonin (HSP60) family. In terms of assembly, forms a cylinder of 14 subunits composed of two heptameric rings stacked back-to-back. Interacts with the co-chaperonin GroES.

It is found in the cytoplasm. The catalysed reaction is ATP + H2O + a folded polypeptide = ADP + phosphate + an unfolded polypeptide.. Its function is as follows. Together with its co-chaperonin GroES, plays an essential role in assisting protein folding. The GroEL-GroES system forms a nano-cage that allows encapsulation of the non-native substrate proteins and provides a physical environment optimized to promote and accelerate protein folding. In terms of biological role, may play a protective role against the defense mechanisms generated by the infected macrophages. The chain is Chaperonin GroEL from Legionella pneumophila.